We begin with the raw amino-acid sequence, 224 residues long: UPF0758 protein BPUM_2444 (224 aa).

Residues 102-224 (VIRTPEDGAN…FVSLKEKGYL (123 aa)) form the MPN domain. Zn(2+) is bound by residues H173, H175, and D186. The JAMM motif signature appears at 173–186 (HNHPSGDPTPSRED).

Belongs to the UPF0758 family.

The sequence is that of UPF0758 protein BPUM_2444 from Bacillus pumilus (strain SAFR-032).